The following is a 344-amino-acid chain: Dihydroorotase (344 aa).

Zn(2+)-binding residues include His14 and His16. Substrate contacts are provided by residues 16–18 (HLR) and Asn42. Zn(2+) is bound by residues Lys100, His137, and His175. N6-carboxylysine is present on Lys100. His137 provides a ligand contact to substrate. Position 220 (Leu220) interacts with substrate. Asp248 contributes to the Zn(2+) binding site. Asp248 is a catalytic residue. Substrate contacts are provided by His252 and Ala264.

This sequence belongs to the metallo-dependent hydrolases superfamily. DHOase family. Class II DHOase subfamily. Homodimer. Zn(2+) is required as a cofactor.

It carries out the reaction (S)-dihydroorotate + H2O = N-carbamoyl-L-aspartate + H(+). It participates in pyrimidine metabolism; UMP biosynthesis via de novo pathway; (S)-dihydroorotate from bicarbonate: step 3/3. Functionally, catalyzes the reversible cyclization of carbamoyl aspartate to dihydroorotate. The polypeptide is Dihydroorotase (Ralstonia nicotianae (strain ATCC BAA-1114 / GMI1000) (Ralstonia solanacearum)).